The chain runs to 486 residues: CUGBP Elav-like family member 4 (486 aa).

Residues 1 to 298 are sufficient for RNA-binding and MSE-dependent splicing activity; the sequence is MYIKMATLAN…AAFAAAQMQQ (298 aa). Positions 18–28 are enriched in polar residues; the sequence is LSTNGLGSSPG. 2 disordered regions span residues 18 to 39 and 121 to 149; these read LSTNGLGSSPGSAGHMNGLSHS and LPGMNRPIQVKPADSESRGGSSCLRQPPS. The RRM 1 domain occupies 54–135; that stretch reads IKLFIGQIPR…RPIQVKPADS (82 aa). The segment covering 138-149 has biased composition (polar residues); the sequence is RGGSSCLRQPPS. One can recognise an RRM 2 domain in the interval 152–232; the sequence is RKLFVGMLNK…SSLVVKFADT (81 aa). The tract at residues 239 to 258 is necessary for TNNT2 exon 5 inclusion; it reads RRMQQMAGQMGMFNPMAIPF. The 76-residue stretch at 404-479 folds into the RRM 3 domain; sequence PQPPPMIPQQ…KRLKVQLKRP (76 aa).

Belongs to the CELF/BRUNOL family. Ubiquitous. Strongly expressed in the cerebellum, hippocampus, amygdala, temporal and frontal cortex and frontal lobes.

The protein localises to the nucleus. Its subcellular location is the cytoplasm. In terms of biological role, RNA-binding protein implicated in the regulation of pre-mRNA alternative splicing. Mediates exon inclusion and/or exclusion in pre-mRNA that are subject to tissue-specific and developmentally regulated alternative splicing. Specifically activates exon 5 inclusion of cardiac isoforms of TNNT2 during heart remodeling at the juvenile to adult transition. Promotes exclusion of both the smooth muscle (SM) and non-muscle (NM) exons in actinin pre-mRNAs. Activates the splicing of MAPT/Tau exon 10. Binds to muscle-specific splicing enhancer (MSE) intronic sites flanking the alternative exon 5 of TNNT2 pre-mRNA. The protein is CUGBP Elav-like family member 4 (CELF4) of Homo sapiens (Human).